Consider the following 305-residue polypeptide: Phosphopantetheine adenylyltransferase (305 aa).

This sequence belongs to the eukaryotic CoaD family.

The protein resides in the cytoplasm. Its subcellular location is the nucleus. The catalysed reaction is (R)-4'-phosphopantetheine + ATP + H(+) = 3'-dephospho-CoA + diphosphate. In terms of biological role, reversibly transfers an adenylyl group from ATP to 4'-phosphopantetheine, yielding dephospho-CoA (dPCoA) and pyrophosphate. Plays a role in the physiological regulation of the intracellular CoA concentration. This chain is Phosphopantetheine adenylyltransferase (CAB4), found in Saccharomyces cerevisiae (strain ATCC 204508 / S288c) (Baker's yeast).